Consider the following 139-residue polypeptide: ATP synthase epsilon chain (139 aa).

The protein belongs to the ATPase epsilon chain family. F-type ATPases have 2 components, CF(1) - the catalytic core - and CF(0) - the membrane proton channel. CF(1) has five subunits: alpha(3), beta(3), gamma(1), delta(1), epsilon(1). CF(0) has three main subunits: a, b and c.

Its subcellular location is the cell inner membrane. Produces ATP from ADP in the presence of a proton gradient across the membrane. The sequence is that of ATP synthase epsilon chain from Actinobacillus pleuropneumoniae serotype 5b (strain L20).